Consider the following 311-residue polypeptide: Zeta-sarcoglycan (311 aa).

The Cytoplasmic segment spans residues 1–50; the sequence is MDRSTDLDIQELKMTREQYILATQQNNLPRPENAQLYPVGIYGWRKRCLY. Residues 51 to 71 traverse the membrane as a helical; Signal-anchor for type II membrane protein segment; it reads FFVLLLLVTMIVNLAMTIWIL. The Extracellular segment spans residues 72–311; sequence KVMNFTVDGM…QSSSSICLWN (240 aa). N-linked (GlcNAc...) asparagine glycosylation is found at Asn75 and Asn123. Cys285 and Cys301 are joined by a disulfide.

Belongs to the sarcoglycan beta/delta/gamma/zeta family. As to expression, expressed in the heart, skeletal muscle and arterial vascular smooth muscle.

The protein resides in the cell membrane. The protein localises to the sarcolemma. It is found in the cytoplasm. Its subcellular location is the cytoskeleton. Its function is as follows. Component of the sarcoglycan complex, a subcomplex of the dystrophin-glycoprotein complex which forms a link between the F-actin cytoskeleton and the extracellular matrix. May play a role in the maintenance of striated muscle membrane stability. This Mus musculus (Mouse) protein is Zeta-sarcoglycan (Sgcz).